The following is a 254-amino-acid chain: MIKNRCLDIDLETKEKVLIVDDEASIRKILETRLSMIGYFVVTASDGEEALNLFHQEMPDVVILDIMMPKLDGYGVCQEIRKDSDVPIIMLTALGDVADRITGLELGADDYVVKPFSPKELEARIRAVLRRTNKAAFSSHLTTSGIINFNFLTIDLNKRQIYKDNERIRLTGMEFSLLELLISRSGQPFSRADILQEVWGYTPERHVDTRVVDVHISRLRAKLETDPSNPDLILTARGTGYLFQRITDQHVLKT.

Residues 16-129 (KVLIVDDEAS…ELEARIRAVL (114 aa)) enclose the Response regulatory domain. Residue D65 is modified to 4-aspartylphosphate. The H-T-H motif DNA-binding region spans 85–103 (DVPIIMLTALGDVADRITG). The ompR/PhoB-type DNA-binding region spans 144–245 (SGIINFNFLT…ARGTGYLFQR (102 aa)).

The protein resides in the plastid. It localises to the chloroplast. Probable promoter-specific protein mediating the interaction between DNA and RNA polymerase. This Guillardia theta (Cryptophyte) protein is Probable transcriptional regulator ycf27 (ycf27).